The primary structure comprises 86 residues: Small ribosomal subunit protein uS17 (86 aa).

It belongs to the universal ribosomal protein uS17 family. In terms of assembly, part of the 30S ribosomal subunit.

In terms of biological role, one of the primary rRNA binding proteins, it binds specifically to the 5'-end of 16S ribosomal RNA. The chain is Small ribosomal subunit protein uS17 from Halorhodospira halophila (strain DSM 244 / SL1) (Ectothiorhodospira halophila (strain DSM 244 / SL1)).